The sequence spans 275 residues: Orotidine 5'-phosphate decarboxylase (275 aa).

Catalysis depends on lysine 101, which acts as the Proton donor.

Belongs to the OMP decarboxylase family. Type 2 subfamily.

The catalysed reaction is orotidine 5'-phosphate + H(+) = UMP + CO2. It functions in the pathway pyrimidine metabolism; UMP biosynthesis via de novo pathway; UMP from orotate: step 2/2. The chain is Orotidine 5'-phosphate decarboxylase from Leptospira interrogans serogroup Icterohaemorrhagiae serovar Lai (strain 56601).